The sequence spans 126 residues: Large ribosomal subunit protein mL55 (126 aa).

Residues 1–34 (MSAKGSLLRLLWQCGMTRAAPESCRYLYTSSWRA) constitute a mitochondrion transit peptide. S86 carries the phosphoserine modification.

Belongs to the mitochondrion-specific ribosomal protein mL55 family. Component of the mitochondrial ribosome large subunit (39S) which comprises a 16S rRNA and about 50 distinct proteins.

Its subcellular location is the mitochondrion. The sequence is that of Large ribosomal subunit protein mL55 (MRPL55) from Bos taurus (Bovine).